The sequence spans 165 residues: MDLSQLTPRRPYLLRAFYEWLLDNQLTPLLVVDVTLPGVQVPMEYARDGQIVLNIAPRAVGNLELANDEVRFNARFGGIPRQVSVPLAAVLAIYARENGAGTMFEPEAAYDEDTSIMNDEEASADNETVMSVIDGDKPDHDDDTHPDDEPPQPPRGGRPALRVVK.

The interval 119-165 is disordered; it reads DEEASADNETVMSVIDGDKPDHDDDTHPDDEPPQPPRGGRPALRVVK. Residues 134-143 are compositionally biased toward basic and acidic residues; sequence DGDKPDHDDD.

Belongs to the SspB family. In terms of assembly, homodimer.

In terms of biological role, enhances recognition of ssrA-tagged proteins by the ClpX-ClpP protease; the ssrA degradation tag (AANDENYALAA) is added trans-translationally to proteins that are stalled on the ribosome, freeing the ribosome and targeting stalled peptides for degradation. SspB activates the ATPase activity of ClpX. Seems to act in concert with SspA in the regulation of several proteins during exponential and stationary-phase growth. Also stimulates degradation of the N-terminus of RseA (residues 1-108, alone or in complex with sigma-E) by ClpX-ClpP in a non-ssrA-mediated fashion. This is Stringent starvation protein B (sspB) from Shigella flexneri.